A 96-amino-acid chain; its full sequence is Large ribosomal subunit protein bL25 (96 aa).

It belongs to the bacterial ribosomal protein bL25 family. As to quaternary structure, part of the 50S ribosomal subunit; part of the 5S rRNA/L5/L18/L25 subcomplex. Contacts the 5S rRNA. Binds to the 5S rRNA independently of L5 and L18.

This is one of the proteins that binds to the 5S RNA in the ribosome where it forms part of the central protuberance. The protein is Large ribosomal subunit protein bL25 of Buchnera aphidicola subsp. Schizaphis graminum (strain Sg).